The sequence spans 221 residues: Proline-rich protein 20A (221 aa).

Disordered regions lie at residues 1 to 103 and 137 to 174; these read MEEP…QRQG and SLSE…GPQA. The segment covering 42-53 has biased composition (low complexity); it reads PAQPAQPAKPIA. Pro residues predominate over residues 63 to 72; that stretch reads PARPESPPPA. The span at 75–93 shows a compositional bias: basic residues; that stretch reads GRRRGGSRRPGRGRGRRAG.

This sequence belongs to the PRR20 family.

This is Proline-rich protein 20A (PRR20A) from Homo sapiens (Human).